Here is a 267-residue protein sequence, read N- to C-terminus: NAD kinase (267 aa).

Asp-45 functions as the Proton acceptor in the catalytic mechanism. NAD(+) contacts are provided by residues 45–46 (DG), 122–123 (NE), Arg-148, Asp-150, 161–166 (TAYNKS), Ala-185, and Gln-223.

The protein belongs to the NAD kinase family. The cofactor is a divalent metal cation.

The protein localises to the cytoplasm. It carries out the reaction NAD(+) + ATP = ADP + NADP(+) + H(+). Its function is as follows. Involved in the regulation of the intracellular balance of NAD and NADP, and is a key enzyme in the biosynthesis of NADP. Catalyzes specifically the phosphorylation on 2'-hydroxyl of the adenosine moiety of NAD to yield NADP. The chain is NAD kinase from Levilactobacillus brevis (strain ATCC 367 / BCRC 12310 / CIP 105137 / JCM 1170 / LMG 11437 / NCIMB 947 / NCTC 947) (Lactobacillus brevis).